Consider the following 334-residue polypeptide: Mitochondrial glycine transporter (334 aa).

Solcar repeat units lie at residues 22 to 106 (SKTT…LRQG), 135 to 219 (LSNW…LKRR), and 237 to 321 (SSSS…LILR). 6 helical membrane-spanning segments follow: residues 28–53 (FVAGLCSGLTSSILLQPADLLKTRVQ), 81–107 (GTLPSALRTGFGSALYFTSLNALRQGI), 141–166 (LATGAIARVAAGFVMMPVTVLKVRYE), 194–217 (GFGATAARDAPYAGLYVLFYEQLK), 241–267 (INFVSGGLAAGLATAITNPFDAVKTRL), and 296–314 (GLGLRITRKALSSALAWTV).

This sequence belongs to the mitochondrial carrier (TC 2.A.29) family. SLC25A38 subfamily.

The protein localises to the mitochondrion inner membrane. It carries out the reaction glycine(in) = glycine(out). Functionally, mitochondrial glycine transporter that imports glycine into the mitochondrial matrix. Plays an important role in providing glycine for the first enzymatic step in heme biosynthesis, the condensation of glycine with succinyl-CoA to produce 5-aminolevulinate (ALA) in the mitochondrial matrix. In Aspergillus clavatus (strain ATCC 1007 / CBS 513.65 / DSM 816 / NCTC 3887 / NRRL 1 / QM 1276 / 107), this protein is Mitochondrial glycine transporter.